The chain runs to 400 residues: Acetylornithine aminotransferase (400 aa).

Pyridoxal 5'-phosphate contacts are provided by residues 102-103 (GA) and Phe-135. Position 138 (Arg-138) interacts with N(2)-acetyl-L-ornithine. Position 220 to 223 (220 to 223 (DEVQ)) interacts with pyridoxal 5'-phosphate. At Lys-249 the chain carries N6-(pyridoxal phosphate)lysine. Position 276 (Ser-276) interacts with N(2)-acetyl-L-ornithine. Thr-277 serves as a coordination point for pyridoxal 5'-phosphate.

The protein belongs to the class-III pyridoxal-phosphate-dependent aminotransferase family. ArgD subfamily. In terms of assembly, homodimer. The cofactor is pyridoxal 5'-phosphate.

Its subcellular location is the cytoplasm. It carries out the reaction N(2)-acetyl-L-ornithine + 2-oxoglutarate = N-acetyl-L-glutamate 5-semialdehyde + L-glutamate. Its pathway is amino-acid biosynthesis; L-arginine biosynthesis; N(2)-acetyl-L-ornithine from L-glutamate: step 4/4. This Gloeobacter violaceus (strain ATCC 29082 / PCC 7421) protein is Acetylornithine aminotransferase.